A 432-amino-acid chain; its full sequence is Glutamate-1-semialdehyde 2,1-aminomutase 1 (432 aa).

Lys-268 is subject to N6-(pyridoxal phosphate)lysine.

The protein belongs to the class-III pyridoxal-phosphate-dependent aminotransferase family. HemL subfamily. As to quaternary structure, homodimer. Pyridoxal 5'-phosphate serves as cofactor.

It localises to the cytoplasm. The catalysed reaction is (S)-4-amino-5-oxopentanoate = 5-aminolevulinate. The protein operates within porphyrin-containing compound metabolism; protoporphyrin-IX biosynthesis; 5-aminolevulinate from L-glutamyl-tRNA(Glu): step 2/2. This Bacillus licheniformis (strain ATCC 14580 / DSM 13 / JCM 2505 / CCUG 7422 / NBRC 12200 / NCIMB 9375 / NCTC 10341 / NRRL NRS-1264 / Gibson 46) protein is Glutamate-1-semialdehyde 2,1-aminomutase 1.